Here is a 254-residue protein sequence, read N- to C-terminus: Mamu class II histocompatibility antigen, DR alpha chain (254 aa).

The signal sequence occupies residues Met1–Ala25. An alpha-1 region spans residues Ile26–Asn109. The Extracellular portion of the chain corresponds to Ile26–Glu216. The N-linked (GlcNAc...) asparagine glycan is linked to Asn103. The alpha-2 stretch occupies residues Val110 to Trp203. Residues Pro112–Glu204 enclose the Ig-like C1-type domain. Cys132 and Cys188 are joined by a disulfide. The tract at residues Glu204–Glu216 is connecting peptide. The helical transmembrane segment at Asn217–Ile239 threads the bilayer. The Cytoplasmic segment spans residues Lys240–Leu254. Residue Lys244 forms a Glycyl lysine isopeptide (Lys-Gly) (interchain with G-Cter in ubiquitin) linkage.

The protein belongs to the MHC class II family. As to quaternary structure, heterodimer of an alpha chain and a beta chain.

The protein resides in the membrane. The protein is Mamu class II histocompatibility antigen, DR alpha chain (Mamu-DRA) of Macaca mulatta (Rhesus macaque).